Consider the following 171-residue polypeptide: 3-hydroxydecanoyl-[acyl-carrier-protein] dehydratase (171 aa).

The active site involves histidine 70.

Belongs to the thioester dehydratase family. FabA subfamily. As to quaternary structure, homodimer.

The protein localises to the cytoplasm. The enzyme catalyses a (3R)-hydroxyacyl-[ACP] = a (2E)-enoyl-[ACP] + H2O. It catalyses the reaction (3R)-hydroxydecanoyl-[ACP] = (2E)-decenoyl-[ACP] + H2O. It carries out the reaction (2E)-decenoyl-[ACP] = (3Z)-decenoyl-[ACP]. It participates in lipid metabolism; fatty acid biosynthesis. Its function is as follows. Necessary for the introduction of cis unsaturation into fatty acids. Catalyzes the dehydration of (3R)-3-hydroxydecanoyl-ACP to E-(2)-decenoyl-ACP and then its isomerization to Z-(3)-decenoyl-ACP. Can catalyze the dehydratase reaction for beta-hydroxyacyl-ACPs with saturated chain lengths up to 16:0, being most active on intermediate chain length. In Xanthomonas euvesicatoria pv. vesicatoria (strain 85-10) (Xanthomonas campestris pv. vesicatoria), this protein is 3-hydroxydecanoyl-[acyl-carrier-protein] dehydratase.